Reading from the N-terminus, the 238-residue chain is Ribosomal RNA small subunit methyltransferase G (238 aa).

S-adenosyl-L-methionine contacts are provided by residues glycine 77, phenylalanine 82, 128–129 (AE), and arginine 147.

This sequence belongs to the methyltransferase superfamily. RNA methyltransferase RsmG family.

It is found in the cytoplasm. Specifically methylates the N7 position of guanine in position 535 of 16S rRNA. This chain is Ribosomal RNA small subunit methyltransferase G, found in Listeria monocytogenes serotype 4b (strain CLIP80459).